We begin with the raw amino-acid sequence, 155 residues long: Pathogenesis-related protein B (155 aa).

This sequence belongs to the BetVI family.

The sequence is that of Pathogenesis-related protein B (PCPR1-3) from Petroselinum crispum (Parsley).